The sequence spans 504 residues: ATP synthase subunit alpha 2 (504 aa).

ATP is bound at residue 169–176; it reads GDRQTGKT.

It belongs to the ATPase alpha/beta chains family. As to quaternary structure, F-type ATPases have 2 components, CF(1) - the catalytic core - and CF(0) - the membrane proton channel. CF(1) has five subunits: alpha(3), beta(3), gamma(1), delta(1), epsilon(1). CF(0) has three main subunits: a(1), b(2) and c(9-12). The alpha and beta chains form an alternating ring which encloses part of the gamma chain. CF(1) is attached to CF(0) by a central stalk formed by the gamma and epsilon chains, while a peripheral stalk is formed by the delta and b chains.

The protein resides in the cell membrane. The catalysed reaction is ATP + H2O + 4 H(+)(in) = ADP + phosphate + 5 H(+)(out). Produces ATP from ADP in the presence of a proton gradient across the membrane. The alpha chain is a regulatory subunit. This is ATP synthase subunit alpha 2 from Listeria monocytogenes serovar 1/2a (strain ATCC BAA-679 / EGD-e).